The sequence spans 88 residues: MRLILSLPVLAVVLAMVLEGPAPAQATTDVSSTSESILGKLKEFGSTVEEKVRTAIDQIKKSNVPEKTKNWFSEVFQKVKEKFETTFS.

The first 26 residues, 1–26, serve as a signal peptide directing secretion; that stretch reads MRLILSLPVLAVVLAMVLEGPAPAQA.

It belongs to the apolipoprotein C1 family.

It is found in the secreted. Its function is as follows. Inhibitor of lipoprotein binding to the low density lipoprotein (LDL) receptor, LDL receptor-related protein, and very low density lipoprotein (VLDL) receptor. Associates with high density lipoproteins (HDL) and the triacylglycerol-rich lipoproteins in the plasma and makes up about 10% of the protein of the VLDL and 2% of that of HDL. Appears to interfere directly with fatty acid uptake and is also the major plasma inhibitor of cholesteryl ester transfer protein (CETP). Binds free fatty acids and reduces their intracellular esterification. Modulates the interaction of APOE with beta-migrating VLDL and inhibits binding of beta-VLDL to the LDL receptor-related protein. The chain is Apolipoprotein C-I (APOC1) from Eidolon helvum (Straw-colored fruit bat).